A 109-amino-acid chain; its full sequence is Nucleoid-associated protein Psyc_0793 (109 aa).

Belongs to the YbaB/EbfC family. In terms of assembly, homodimer.

It is found in the cytoplasm. It localises to the nucleoid. In terms of biological role, binds to DNA and alters its conformation. May be involved in regulation of gene expression, nucleoid organization and DNA protection. The polypeptide is Nucleoid-associated protein Psyc_0793 (Psychrobacter arcticus (strain DSM 17307 / VKM B-2377 / 273-4)).